Here is a 192-residue protein sequence, read N- to C-terminus: Spermatogenesis-associated protein 3 (192 aa).

Over residues 1–15 (MKKVKKKRSEARRHR) the composition is skewed to basic residues. Disordered stretches follow at residues 1-65 (MKKV…TTSR) and 161-184 (SRKPSSHRNACPPSPRNCGCGSGG). Low complexity predominate over residues 19 to 59 (SQHASSNSTSQQPSPESTPQQPSPESTPQQPSPESTPQHSS).

The protein localises to the cell projection. It is found in the cilium. Its subcellular location is the flagellum. This chain is Spermatogenesis-associated protein 3 (SPATA3), found in Homo sapiens (Human).